The primary structure comprises 342 residues: uncharacterized protein (342 aa).

This sequence belongs to the cycloisomerase 2 family.

This is an uncharacterized protein from Staphylococcus epidermidis (strain ATCC 12228 / FDA PCI 1200).